Here is a 350-residue protein sequence, read N- to C-terminus: Phosphoribosylformylglycinamidine cyclo-ligase (350 aa).

It belongs to the AIR synthase family.

Its subcellular location is the cytoplasm. It carries out the reaction 2-formamido-N(1)-(5-O-phospho-beta-D-ribosyl)acetamidine + ATP = 5-amino-1-(5-phospho-beta-D-ribosyl)imidazole + ADP + phosphate + H(+). It functions in the pathway purine metabolism; IMP biosynthesis via de novo pathway; 5-amino-1-(5-phospho-D-ribosyl)imidazole from N(2)-formyl-N(1)-(5-phospho-D-ribosyl)glycinamide: step 2/2. This Cupriavidus necator (strain ATCC 17699 / DSM 428 / KCTC 22496 / NCIMB 10442 / H16 / Stanier 337) (Ralstonia eutropha) protein is Phosphoribosylformylglycinamidine cyclo-ligase.